Reading from the N-terminus, the 88-residue chain is Large ribosomal subunit protein eL31 (88 aa).

It belongs to the eukaryotic ribosomal protein eL31 family.

The polypeptide is Large ribosomal subunit protein eL31 (Saccharolobus islandicus (strain Y.N.15.51 / Yellowstone #2) (Sulfolobus islandicus)).